Consider the following 242-residue polypeptide: Transcription factor TCP17 (242 aa).

One can recognise a TCP domain in the interval 33–91 (GKDRHSKVCTVRGLRDRRIRLSVMTAIQVYDLQERLGLSQPSKVIDWLLEVAKNDVDLL).

As to quaternary structure, interacts with SPL. Expressed in cotyledons, particularly in the vascular region, in leaves, roots, stems, buds, flowers and siliques.

The protein localises to the nucleus. Plays a pivotal role in the control of morphogenesis of shoot organs by negatively regulating the expression of boundary-specific genes such as CUC genes, probably through the induction of miRNA (e.g. miR164). Participates in ovule development. This Arabidopsis thaliana (Mouse-ear cress) protein is Transcription factor TCP17 (TCP17).